The primary structure comprises 78 residues: Translational regulator CsrA (78 aa).

This sequence belongs to the CsrA/RsmA family. Homodimer; the beta-strands of each monomer intercalate to form a hydrophobic core, while the alpha-helices form wings that extend away from the core.

The protein localises to the cytoplasm. Its function is as follows. A translational regulator that binds mRNA to regulate translation initiation and/or mRNA stability. Usually binds in the 5'-UTR at or near the Shine-Dalgarno sequence preventing ribosome-binding, thus repressing translation. Its main target seems to be the major flagellin gene, while its function is anatagonized by FliW. The chain is Translational regulator CsrA from Desulfovibrio desulfuricans (strain ATCC 27774 / DSM 6949 / MB).